The chain runs to 260 residues: COP9 signalosome complex subunit 7 (260 aa).

The region spanning methionine 1–glycine 159 is the PCI domain. The tract at residues isoleucine 228–arginine 260 is disordered. Basic residues predominate over residues proline 251–arginine 260.

Belongs to the CSN7/EIF3M family. CSN7 subfamily. Component of the CSN complex, probably composed of CSN1, CSN2, CSN3, CSN4, CSN5 (CSN5A or CSN5B), CSN6 (CSN6A or CSN6B), CSN7 and CSN8. In the CSN complex, it probably interacts directly with CSN4. Interacts (via PCI domain) with CSN1 (via PCI domain) and CSN8 (via PCI domain), and (via C-terminal tail) with CSN6A, TSO2 and RNR2A. Cannot interact simultaneously with CSN1 and CSN8 to form ternary complexes. Also exists as a monomeric form. Binds to the translation initiation factors TIF3E1 and TIF3H1. Post-translationally, phosphorylated.

Its subcellular location is the cytoplasm. It is found in the nucleus. In terms of biological role, component of the COP9 signalosome complex (CSN), a complex involved in various cellular and developmental processes such as photomorphogenesis and auxin and jasmonate responses. The CSN complex is an essential regulator of the ubiquitin (Ubl) conjugation pathway by mediating the deneddylation of the cullin subunits of SCF-type E3 ligase complexes, leading to decrease the Ubl ligase activity of SCF. It is involved in repression of photomorphogenesis in darkness by regulating the activity of COP1-containing Ubl ligase complexes. The complex is also required for degradation of IAA6 by regulating the activity of the Ubl ligase SCF-TIR complex. Regulates the TSO2 subcellular localization. May be involved in nucleic acid binding. The polypeptide is COP9 signalosome complex subunit 7 (CSN7) (Arabidopsis thaliana (Mouse-ear cress)).